The primary structure comprises 279 residues: Thymidylate synthase (279 aa).

133-134 contributes to the dUMP binding site; the sequence is RR. The active-site Nucleophile is cysteine 154. Residues 178–181, asparagine 189, and 219–221 each bind dUMP; these read RSND and HIY. Position 181 (aspartate 181) interacts with (6R)-5,10-methylene-5,6,7,8-tetrahydrofolate. Residue alanine 278 coordinates (6R)-5,10-methylene-5,6,7,8-tetrahydrofolate.

Belongs to the thymidylate synthase family. Bacterial-type ThyA subfamily. In terms of assembly, homodimer.

It is found in the cytoplasm. It catalyses the reaction dUMP + (6R)-5,10-methylene-5,6,7,8-tetrahydrofolate = 7,8-dihydrofolate + dTMP. It participates in pyrimidine metabolism; dTTP biosynthesis. Its function is as follows. Catalyzes the reductive methylation of 2'-deoxyuridine-5'-monophosphate (dUMP) to 2'-deoxythymidine-5'-monophosphate (dTMP) while utilizing 5,10-methylenetetrahydrofolate (mTHF) as the methyl donor and reductant in the reaction, yielding dihydrofolate (DHF) as a by-product. This enzymatic reaction provides an intracellular de novo source of dTMP, an essential precursor for DNA biosynthesis. The chain is Thymidylate synthase from Streptococcus sanguinis (strain SK36).